We begin with the raw amino-acid sequence, 229 residues long: Probable transmembrane reductase CYB561D1 (229 aa).

At 1-24 (MQPLEVGLVPAPAGEPRLTRWLRR) the chain is on the cytoplasmic side. One can recognise a Cytochrome b561 domain in the interval 22 to 224 (LRRGSGILAH…HQISRSYLPR (203 aa)). The chain crosses the membrane as a helical span at residues 25–45 (GSGILAHLVALGFTIFLTALS). Over 46-53 (RPGTSLFS) the chain is Lumenal. The helical transmembrane segment at 54–74 (WHPVFMALAFCLCMAEAILLF) threads the bilayer. Position 55 (His55) interacts with heme b. Residues 75–91 (SPEHSLFFFCSRKARIR) lie on the Cytoplasmic side of the membrane. Residues 92–112 (LHWAGQTLAILCAALGLGFII) traverse the membrane as a helical segment. Residues His93 and His127 each coordinate heme b. Topologically, residues 113–128 (SSRTRSELPHLVSWHS) are lumenal. A helical transmembrane segment spans residues 129–149 (WVGALTLLATAVQALCGLCLL). Residues 150-169 (CPRAARVSRVARLKLYHLTC) lie on the Cytoplasmic side of the membrane. His166 contacts heme b. The chain crosses the membrane as a helical span at residues 170–190 (GLVVYLMATVTVLLGMYSVWF). At 191–193 (QAQ) the chain is on the lumenal side. A helical membrane pass occupies residues 194–214 (IKGAAWYLCLALPVYPALVIM). Over 215-229 (HQISRSYLPRKKMEM) the chain is Cytoplasmic.

Requires heme b as cofactor.

Its subcellular location is the membrane. The enzyme catalyses monodehydro-L-ascorbate radical(out) + L-ascorbate(in) = monodehydro-L-ascorbate radical(in) + L-ascorbate(out). It carries out the reaction Fe(3+)(out) + L-ascorbate(in) = monodehydro-L-ascorbate radical(in) + Fe(2+)(out) + H(+). Functionally, probable transmembrane reductase that may use ascorbate as an electron donor and transfer electrons across membranes to reduce monodehydro-L-ascorbate radical and iron cations Fe(3+) in another cellular compartment. This chain is Probable transmembrane reductase CYB561D1, found in Homo sapiens (Human).